Consider the following 309-residue polypeptide: MHTGQIIQLLAGFYDVLTEDHKIVRTRARGNFRNQKTSPLVGDMVDFKESENDTGYITKIHTRENELVRPPLANIDQAVIVTAATEPSFSANLLDRQLVALAEKHIEAILYFSKTDLLSPTEFQDLQKIAGYYQKIGYQVIFPISSQPDADLIELKESFKNQLTIFMGQTGAGKSTLLNRIDSKLNIATGEVSQALNRGKHTTRKVSLIPIEDGLVADTPGFSTYAVFEMADTQLKEYFIDFKKLSQNCRFRECLHLNEPGCAVKAAVEDGSVLSSRYANYEQFIELIRNQKPEYKRKGYQKKDRRKKK.

The 162-residue stretch at 64–225 folds into the CP-type G domain; it reads ENELVRPPLA…VADTPGFSTY (162 aa). GTP-binding positions include 113 to 116 and 168 to 176; these read SKTD and GQTGAGKST. Zn(2+) contacts are provided by cysteine 249, cysteine 254, histidine 256, and cysteine 262.

It belongs to the TRAFAC class YlqF/YawG GTPase family. RsgA subfamily. Monomer. Associates with 30S ribosomal subunit, binds 16S rRNA. Requires Zn(2+) as cofactor.

The protein resides in the cytoplasm. Its function is as follows. One of several proteins that assist in the late maturation steps of the functional core of the 30S ribosomal subunit. Helps release RbfA from mature subunits. May play a role in the assembly of ribosomal proteins into the subunit. Circularly permuted GTPase that catalyzes slow GTP hydrolysis, GTPase activity is stimulated by the 30S ribosomal subunit. This chain is Small ribosomal subunit biogenesis GTPase RsgA, found in Pediococcus pentosaceus (strain ATCC 25745 / CCUG 21536 / LMG 10740 / 183-1w).